A 91-amino-acid polypeptide reads, in one-letter code: Non-specific lipid-transfer protein P5 (91 aa).

Intrachain disulfides connect Cys3/Cys50, Cys13/Cys27, Cys28/Cys73, and Cys48/Cys87.

The protein resides in the secreted. Its function is as follows. Plant non-specific lipid-transfer proteins transfer phospholipids as well as galactolipids across membranes. May play a role in wax or cutin deposition in the cell walls of expanding epidermal cells and certain secretory tissues. The polypeptide is Non-specific lipid-transfer protein P5 (Vitis sp. (Grape)).